We begin with the raw amino-acid sequence, 290 residues long: Enoyl-CoA hydratase, mitochondrial (290 aa).

The N-terminal 27 residues, 1–27, are a transit peptide targeting the mitochondrion; sequence MAALRALLPRVRAPLRPWLFCPVQRSF. Residues 98–101 and Gly-141 each bind substrate; that span reads ADIK. Lys-101 carries the N6-acetyllysine; alternate modification. Lys-101 is subject to N6-succinyllysine; alternate. Lys-204 is subject to N6-succinyllysine. Position 211 is an N6-acetyllysine (Lys-211).

This sequence belongs to the enoyl-CoA hydratase/isomerase family. As to quaternary structure, homohexamer; dimer of trimers.

The protein localises to the mitochondrion matrix. The catalysed reaction is a (3S)-3-hydroxyacyl-CoA = a (2E)-enoyl-CoA + H2O. The enzyme catalyses a (3E)-enoyl-CoA = a 4-saturated (2E)-enoyl-CoA. It carries out the reaction (3E)-hexenoyl-CoA = (2E)-hexenoyl-CoA. It catalyses the reaction (3S)-3-hydroxybutanoyl-CoA = (2E)-butenoyl-CoA + H2O. The catalysed reaction is 3-hydroxyisovaleryl-CoA = 3-methylbut-2-enoyl-CoA + H2O. The enzyme catalyses 3-hydroxypropanoyl-CoA = acryloyl-CoA + H2O. It carries out the reaction 3-hydroxybutanoyl-CoA = (2E)-butenoyl-CoA + H2O. It catalyses the reaction 2-methylpropenoyl-CoA + H2O = (S)-3-hydroxyisobutanoyl-CoA. The catalysed reaction is (3S)-hydroxyhexanoyl-CoA = (2E)-hexenoyl-CoA + H2O. The enzyme catalyses (3S)-hydroxydecanoyl-CoA = (2E)-decenoyl-CoA + H2O. It functions in the pathway lipid metabolism; fatty acid beta-oxidation. Functionally, converts unsaturated trans-2-enoyl-CoA species ((2E)-enoyl-CoA) to the corresponding 3(S)-3-hydroxyacyl-CoA species through addition of a water molecule to the double bond. Catalyzes the hydration of medium- and short-chained fatty enoyl-CoA thioesters from 4 carbons long (C4) up to C16. Has high substrate specificity for crotonyl-CoA ((2E)-butenoyl-CoA) and moderate specificity for acryloyl-CoA, 3-methylcrotonyl-CoA (3-methyl-(2E)-butenoyl-CoA) and methacrylyl-CoA ((2E)-2-methylpropenoyl-CoA). Can bind tiglyl-CoA (2-methylcrotonoyl-CoA), but hydrates only a small amount of this substrate. Plays a key role in the beta-oxidation spiral of short- and medium-chain fatty acid oxidation. At a lower rate than the hydratase reaction, catalyzes the isomerase reaction of trans-3-enoyl-CoA species (such as (3E)-hexenoyl-CoA) to trans-2-enoyl-CoA species (such as (2E)-hexenoyl-CoA), which are subsequently hydrated to 3(S)-3-hydroxyacyl-CoA species (such as (3S)-hydroxyhexanoyl-CoA). This is Enoyl-CoA hydratase, mitochondrial (ECHS1) from Bos taurus (Bovine).